The primary structure comprises 77 residues: Acyl carrier protein (77 aa).

In terms of domain architecture, Carrier spans 2 to 77 (ADVLERVTKI…DAVTYIESHL (76 aa)). Serine 37 bears the O-(pantetheine 4'-phosphoryl)serine mark.

The protein belongs to the acyl carrier protein (ACP) family. In terms of processing, 4'-phosphopantetheine is transferred from CoA to a specific serine of apo-ACP by AcpS. This modification is essential for activity because fatty acids are bound in thioester linkage to the sulfhydryl of the prosthetic group.

Its subcellular location is the cytoplasm. It participates in lipid metabolism; fatty acid biosynthesis. Its function is as follows. Carrier of the growing fatty acid chain in fatty acid biosynthesis. The protein is Acyl carrier protein of Bacillus mycoides (strain KBAB4) (Bacillus weihenstephanensis).